Here is a 400-residue protein sequence, read N- to C-terminus: Multidrug resistance protein 2 (400 aa).

Helical transmembrane passes span 11-31 (IFII…LIIP), 46-66 (TMGY…PFAG), 78-98 (IILG…GTHV), 106-126 (ILGG…VADI), 142-162 (AIST…GFGI), 164-184 (MPFF…VFIL), 213-233 (IHPV…GLSA), 253-273 (IAAI…LLFG), 297-317 (FVST…FIFL), 346-366 (STYT…LFDL), and 368-388 (IHYP…LTMV).

This sequence belongs to the major facilitator superfamily. TCR/Tet family.

The protein localises to the cell membrane. Energy-dependent efflux pump responsible for decreased drug accumulation in multi-drug-resistant cells. Probably uses a transmembrane proton gradient as the energy source. Causes the efflux of a variety of toxic substances, including such structurally diverse compounds as ethidium bromide, rhodamine and acridine dyes, tetraphenylphosphonium, puromycin, chloramphenicol, doxorubicin, and fluoroquinolone antibiotics. This is Multidrug resistance protein 2 (blt) from Bacillus subtilis (strain 168).